The following is a 229-amino-acid chain: Tubulin-specific chaperone B (229 aa).

The region spanning 170 to 212 (GATKFKEGVWVGVKYDEPVGKNDGSVAGVRYFDCDPKYGGFVR) is the CAP-Gly domain.

Belongs to the TBCB family. Supercomplex made of cofactors A to E. Cofactors A and D function by capturing and stabilizing tubulin in a quasi-native conformation. Cofactor E binds to the cofactor D-tubulin complex; interaction with cofactor C then causes the release of tubulin polypeptides that are committed to the native state.

Its subcellular location is the cytoplasm. The protein resides in the cytoskeleton. In terms of biological role, binds to alpha-tubulin folding intermediates after their interaction with cytosolic chaperonin in the pathway leading from newly synthesized tubulin to properly folded heterodimer. The sequence is that of Tubulin-specific chaperone B from Caenorhabditis elegans.